The following is a 198-amino-acid chain: Probable chemoreceptor glutamine deamidase CheD (198 aa).

Belongs to the CheD family.

The catalysed reaction is L-glutaminyl-[protein] + H2O = L-glutamyl-[protein] + NH4(+). Its function is as follows. Probably deamidates glutamine residues to glutamate on methyl-accepting chemotaxis receptors (MCPs), playing an important role in chemotaxis. The polypeptide is Probable chemoreceptor glutamine deamidase CheD (Stenotrophomonas maltophilia (strain R551-3)).